Here is a 359-residue protein sequence, read N- to C-terminus: Guanine nucleotide-binding protein subunit alpha-11 (359 aa).

S-palmitoyl cysteine attachment occurs at residues Cys-9 and Cys-10. The G-alpha domain occupies 38 to 359; that stretch reads RELKLLLLGT…QLNLKEYNLV (322 aa). The tract at residues 41 to 54 is G1 motif; it reads KLLLLGTGESGKST. GTP-binding positions include 46-53 and 180-183; these read GTGESGKS and LRVR. Ser-53 serves as a coordination point for Mg(2+). The G2 motif stretch occupies residues 178 to 186; that stretch reads DVLRVRVPT. Thr-186 contributes to the Mg(2+) binding site. Positions 201-210 are G3 motif; sequence FRMVDVGGQR. A G4 motif region spans residues 270–277; that stretch reads ILFLNKKD. GTP-binding positions include 274 to 277 and Ala-331; that span reads NKKD. A G5 motif region spans residues 329 to 334; sequence TCATDT.

The protein belongs to the G-alpha family. G(q) subfamily. G proteins are composed of 3 units; alpha, beta and gamma. The alpha chain contains the guanine nucleotide binding site. Interacts with RGS22. Interacts with NTSR1.

It is found in the cell membrane. The protein resides in the cytoplasm. The enzyme catalyses GTP + H2O = GDP + phosphate + H(+). In terms of biological role, guanine nucleotide-binding proteins (G proteins) function as transducers downstream of G protein-coupled receptors (GPCRs) in numerous signaling cascades. The alpha chain contains the guanine nucleotide binding site and alternates between an active, GTP-bound state and an inactive, GDP-bound state. Signaling by an activated GPCR promotes GDP release and GTP binding. The alpha subunit has a low GTPase activity that converts bound GTP to GDP, thereby terminating the signal. Both GDP release and GTP hydrolysis are modulated by numerous regulatory proteins. Signaling is mediated via phospholipase C-beta-dependent inositol lipid hydrolysis for signal propagation: activates phospholipase C-beta: following GPCR activation, GNA11 activates PLC-beta (PLCB1, PLCB2, PLCB3 or PLCB4), leading to production of diacylglycerol (DAG) and inositol 1,4,5-trisphosphate (IP3). Transduces FFAR4 signaling in response to long-chain fatty acids (LCFAs). Together with GNAQ, required for heart development. In the respiratory epithelium, transmits OXGR1-dependent signals that lead to downstream intracellular Ca(2+) release and mucocilliary clearance of airborne pathogens. This Sus scrofa (Pig) protein is Guanine nucleotide-binding protein subunit alpha-11 (GNA11).